The chain runs to 450 residues: Tyrosine-protein kinase CSK (450 aa).

S2 is subject to N-acetylserine. The region spanning 9–70 is the SH3 domain; it reads PSGTECIAKY…PANYVQKREG (62 aa). The interaction with PTPN22 stretch occupies residues 9 to 70; sequence PSGTECIAKY…PANYVQKREG (62 aa). The region spanning 82-171 is the SH2 domain; it reads WFHGKITREQ…GLCTRLIKPK (90 aa). Y184 carries the post-translational modification Phosphotyrosine. The Protein kinase domain maps to 195-449; sequence LKLLQTIGKG…LEHIKTHELH (255 aa). ATP contacts are provided by residues 201 to 209 and K222; that span reads IGKGEFGDV. The residue at position 304 (Y304) is a Phosphotyrosine. D314 functions as the Proton acceptor in the catalytic mechanism. Residue S364 is modified to Phosphoserine; by PKA. Y416 bears the Phosphotyrosine; by autocatalysis mark.

It belongs to the protein kinase superfamily. Tyr protein kinase family. CSK subfamily. As to quaternary structure, homodimer (via SH3-domain). Interacts with PTPN22. Interacts with phosphorylated SIT1, PAG1, LIME1 and TGFB1I1; these interactions serve to recruit CSK to the membrane where it can phosphorylate and inhibit Src-family kinases. Interacts with SRCIN1. Interacts with RHOH. Interacts (via SH2 domain) with SCIMP; this interaction is dependent on phosphorylation of SCIMP 'Tyr-107'. Interacts (via SH2 domain) with PRAG1 (when phosphorylated at 'Tyr-391'); this interaction prevents translocation of CSK from the cytoplasm to the membrane leading to increased activity of CSK. Interacts with LRRK1. Mg(2+) is required as a cofactor. The cofactor is Mn(2+). Post-translationally, phosphorylated at Ser-364 by PKA, leading to increased activity. Autophosphorylated. In terms of tissue distribution, expressed in lung and macrophages.

It is found in the cytoplasm. The protein resides in the cell membrane. The catalysed reaction is L-tyrosyl-[protein] + ATP = O-phospho-L-tyrosyl-[protein] + ADP + H(+). Functionally, non-receptor tyrosine-protein kinase that plays an important role in the regulation of cell growth, differentiation, migration and immune response. Phosphorylates tyrosine residues located in the C-terminal tails of Src-family kinases (SFKs) including LCK, SRC, HCK, FYN, LYN, CSK or YES1. Upon tail phosphorylation, Src-family members engage in intramolecular interactions between the phosphotyrosine tail and the SH2 domain that result in an inactive conformation. To inhibit SFKs, CSK is recruited to the plasma membrane via binding to transmembrane proteins or adapter proteins located near the plasma membrane. Suppresses signaling by various surface receptors, including T-cell receptor (TCR) and B-cell receptor (BCR) by phosphorylating and maintaining inactive several positive effectors such as FYN or LCK. The sequence is that of Tyrosine-protein kinase CSK (CSK) from Homo sapiens (Human).